A 350-amino-acid chain; its full sequence is Protein RecA (350 aa).

G65–T72 lines the ATP pocket.

Belongs to the RecA family.

The protein resides in the cytoplasm. Its function is as follows. Can catalyze the hydrolysis of ATP in the presence of single-stranded DNA, the ATP-dependent uptake of single-stranded DNA by duplex DNA, and the ATP-dependent hybridization of homologous single-stranded DNAs. It interacts with LexA causing its activation and leading to its autocatalytic cleavage. This Clostridium tetani (strain Massachusetts / E88) protein is Protein RecA.